The sequence spans 264 residues: MQQYQALLRDILENGHKRGDRTGVGTIGVFGRQMRFDLSEGFPMVTTKRLHLRSIIVELLWFLRGDTNIAYLKENGVSIWDEWADENGDLGPVYGKQWRSWATPNGEAIDQIQWVLNEIRTNPNSRRLIVSAWNPADVNDMALPPCHCLFQFNVMDGKLNCQLYQRSADVFLGVPFNIASYALLTMMMARATGLQPGEFVHTFGDAHLYLNHLEQAELQLTREPRDLPTIHMNPDKADLFGWEYEDFRVDGYAPHPHIKAPVAV.

A dUMP-binding site is contributed by Arg21. (6R)-5,10-methylene-5,6,7,8-tetrahydrofolate is bound at residue His51. 126–127 (RR) is a dUMP binding site. The active-site Nucleophile is Cys146. Residues 166-169 (RSAD), Asn177, and 207-209 (HLY) each bind dUMP. Residue Asp169 coordinates (6R)-5,10-methylene-5,6,7,8-tetrahydrofolate. Ala263 provides a ligand contact to (6R)-5,10-methylene-5,6,7,8-tetrahydrofolate.

The protein belongs to the thymidylate synthase family. Bacterial-type ThyA subfamily. In terms of assembly, homodimer.

The protein localises to the cytoplasm. It catalyses the reaction dUMP + (6R)-5,10-methylene-5,6,7,8-tetrahydrofolate = 7,8-dihydrofolate + dTMP. It participates in pyrimidine metabolism; dTTP biosynthesis. Its function is as follows. Catalyzes the reductive methylation of 2'-deoxyuridine-5'-monophosphate (dUMP) to 2'-deoxythymidine-5'-monophosphate (dTMP) while utilizing 5,10-methylenetetrahydrofolate (mTHF) as the methyl donor and reductant in the reaction, yielding dihydrofolate (DHF) as a by-product. This enzymatic reaction provides an intracellular de novo source of dTMP, an essential precursor for DNA biosynthesis. The chain is Thymidylate synthase from Hyphomonas neptunium (strain ATCC 15444).